A 54-amino-acid chain; its full sequence is Potassium channel toxin alpha-KTx 14.1 (54 aa).

An N-terminal signal peptide occupies residues 1-23; sequence MKIFFAILLILAVCSMAIWTVNG.

It belongs to the short scorpion toxin superfamily. Potassium channel inhibitor family. Alpha-KTx 14 subfamily. In terms of processing, probably has three disulfide bridges. In terms of tissue distribution, expressed by the venom gland.

The protein resides in the secreted. Functionally, potential blocker of potassium channels. The chain is Potassium channel toxin alpha-KTx 14.1 from Olivierus martensii (Manchurian scorpion).